We begin with the raw amino-acid sequence, 283 residues long: Glutamate racemase (283 aa).

Substrate contacts are provided by residues 28-29 (DS) and 60-61 (YG). The active-site Proton donor/acceptor is C92. 93 to 94 (NT) contacts substrate. Residue C204 is the Proton donor/acceptor of the active site. Substrate is bound at residue 205–206 (TH).

Belongs to the aspartate/glutamate racemases family.

The enzyme catalyses L-glutamate = D-glutamate. Its pathway is cell wall biogenesis; peptidoglycan biosynthesis. In terms of biological role, provides the (R)-glutamate required for cell wall biosynthesis. This is Glutamate racemase from Klebsiella pneumoniae (strain 342).